Here is a 463-residue protein sequence, read N- to C-terminus: ATP synthase subunit beta (463 aa).

151–158 (GGAGVGKT) provides a ligand contact to ATP.

It belongs to the ATPase alpha/beta chains family. In terms of assembly, F-type ATPases have 2 components, CF(1) - the catalytic core - and CF(0) - the membrane proton channel. CF(1) has five subunits: alpha(3), beta(3), gamma(1), delta(1), epsilon(1). CF(0) has three main subunits: a(1), b(2) and c(9-12). The alpha and beta chains form an alternating ring which encloses part of the gamma chain. CF(1) is attached to CF(0) by a central stalk formed by the gamma and epsilon chains, while a peripheral stalk is formed by the delta and b chains.

The protein localises to the cell membrane. It catalyses the reaction ATP + H2O + 4 H(+)(in) = ADP + phosphate + 5 H(+)(out). Functionally, produces ATP from ADP in the presence of a proton gradient across the membrane. The catalytic sites are hosted primarily by the beta subunits. In Clostridium botulinum (strain ATCC 19397 / Type A), this protein is ATP synthase subunit beta.